We begin with the raw amino-acid sequence, 41 residues long: Photosystem I reaction center subunit IX (41 aa).

Residues Y7–I27 traverse the membrane as a helical segment.

It belongs to the PsaJ family.

Its subcellular location is the plastid. The protein resides in the chloroplast thylakoid membrane. In terms of biological role, may help in the organization of the PsaE and PsaF subunits. The polypeptide is Photosystem I reaction center subunit IX (Chara vulgaris (Common stonewort)).